A 946-amino-acid chain; its full sequence is Villin-4 (946 aa).

Gelsolin-like repeat units lie at residues 28–109 (NFKP…ETEK), 152–219 (VHVK…EDGK), 274–339 (LEHE…TIMF), and 641–715 (EIHH…PQFF). Disordered stretches follow at residues 744-783 (ATPSLDKPKRRTPAFSGRNAGQDKSQQRTRSMSHSPERHR) and 846-902 (TKST…PAPD). The span at 765-777 (QDKSQQRTRSMSH) shows a compositional bias: polar residues. Positions 874 to 883 (SENEPEDDEN) are enriched in acidic residues. Positions 881–946 (DENSTIYPYE…NRLKSDLQLF (66 aa)) constitute an HP domain.

Belongs to the villin/gelsolin family.

It localises to the cytoplasm. Its subcellular location is the cytoskeleton. Ca(2+)-regulated actin-binding protein. Binds actin microfilaments (MFs). Involved in actin filament bundling, severing and capping. Caps the barbed end of actin filaments and is able to sever them in a calcium-dependent manner. In Oryza sativa subsp. indica (Rice), this protein is Villin-4.